Reading from the N-terminus, the 658-residue chain is UvrABC system protein B (658 aa).

Residues glutamate 26–arginine 413 enclose the Helicase ATP-binding domain. Residue glycine 39 to threonine 46 participates in ATP binding. Positions tyrosine 92–isoleucine 115 match the Beta-hairpin motif. The Helicase C-terminal domain occupies glutamine 430–isoleucine 596. A UVR domain is found at glutamate 622–glutamate 657.

This sequence belongs to the UvrB family. Forms a heterotetramer with UvrA during the search for lesions. Interacts with UvrC in an incision complex.

Its subcellular location is the cytoplasm. Functionally, the UvrABC repair system catalyzes the recognition and processing of DNA lesions. A damage recognition complex composed of 2 UvrA and 2 UvrB subunits scans DNA for abnormalities. Upon binding of the UvrA(2)B(2) complex to a putative damaged site, the DNA wraps around one UvrB monomer. DNA wrap is dependent on ATP binding by UvrB and probably causes local melting of the DNA helix, facilitating insertion of UvrB beta-hairpin between the DNA strands. Then UvrB probes one DNA strand for the presence of a lesion. If a lesion is found the UvrA subunits dissociate and the UvrB-DNA preincision complex is formed. This complex is subsequently bound by UvrC and the second UvrB is released. If no lesion is found, the DNA wraps around the other UvrB subunit that will check the other stand for damage. In Bacillus anthracis, this protein is UvrABC system protein B.